We begin with the raw amino-acid sequence, 435 residues long: Xylose isomerase (435 aa).

2 residues coordinate Mg(2+): Asp306 and Asp308.

The protein belongs to the xylose isomerase family. As to quaternary structure, homotetramer. Mg(2+) serves as cofactor.

It localises to the cytoplasm. The enzyme catalyses alpha-D-xylose = alpha-D-xylulofuranose. The chain is Xylose isomerase from Brucella melitensis biotype 2 (strain ATCC 23457).